Consider the following 106-residue polypeptide: uncharacterized protein (106 aa).

This is an uncharacterized protein from Sinorhizobium fredii (strain NBRC 101917 / NGR234).